A 254-amino-acid polypeptide reads, in one-letter code: Type III pantothenate kinase 2 (254 aa).

6–13 provides a ligand contact to ATP; it reads DMGNSHIH. Residue 107–110 coordinates substrate; sequence GADR. The active-site Proton acceptor is the Asp109. Position 130 (Asp130) interacts with K(+). ATP is bound at residue Thr133. Position 185 (Thr185) interacts with substrate.

This sequence belongs to the type III pantothenate kinase family. As to quaternary structure, homodimer. Requires NH4(+) as cofactor. K(+) serves as cofactor.

The protein resides in the cytoplasm. The enzyme catalyses (R)-pantothenate + ATP = (R)-4'-phosphopantothenate + ADP + H(+). It functions in the pathway cofactor biosynthesis; coenzyme A biosynthesis; CoA from (R)-pantothenate: step 1/5. In terms of biological role, catalyzes the phosphorylation of pantothenate (Pan), the first step in CoA biosynthesis. This chain is Type III pantothenate kinase 2, found in Francisella tularensis subsp. holarctica (strain LVS).